A 478-amino-acid chain; its full sequence is Trigger factor (478 aa).

A compositionally biased stretch (basic and acidic residues) spans 154–167 (MAKDSRSFEPREEG). 2 disordered regions span residues 154–173 (MAKD…AQSG) and 441–478 (KEAL…KAAG). Positions 173-258 (GDRVTIDFVG…VKAVAAPGET (86 aa)) constitute a PPIase FKBP-type domain.

This sequence belongs to the FKBP-type PPIase family. Tig subfamily.

It is found in the cytoplasm. The catalysed reaction is [protein]-peptidylproline (omega=180) = [protein]-peptidylproline (omega=0). Its function is as follows. Involved in protein export. Acts as a chaperone by maintaining the newly synthesized protein in an open conformation. Functions as a peptidyl-prolyl cis-trans isomerase. This chain is Trigger factor, found in Methylorubrum extorquens (strain CM4 / NCIMB 13688) (Methylobacterium extorquens).